The primary structure comprises 712 residues: MNQYLAITSRGLENLLAEELEQLGAQSIQVVHAGVRFKADQSTAYRCCLWTRISSRIIQVLSEFTVRDDMDLYLGAAAINWTEYFSNATRIVVDFNGTNREIRNSQYGAMKVKDAIVDRFTKADLRRPNIDREQPDLRIHMRLSGEKGVLGLDMAGSGLHQRGYRTEAGRAPLRETHAAALVLKSGWTPGQPLLDPMCGSGTLLIEAAMMAADIAPGLKRKRWGFESIKDFDKDAWLEIHAEASVKARRGPAKVQTKFFGFELEHRILAIARDNAGRAGVKELINFQQGDATELKAPEGFDAGIVICNPPYGERLGTTPELISLYTELGNRLKLAFAGSSASIYSGSNELLSCLRMRADKQFKLPNGALDCVLKTYLITAGSVKKEEGEAEGHVEQENVAPDFANRLKKNITKLNKWAKKEGIDCYRIYDADLPNYNAAIDKYNDYLIIQEYAAPKTVPEEIARRRIMDVLRATIEVTGVQTDKVILKVRERQKGKNQYQKLSNAERHIIVNEYGVDLKVNLYDYLDTGLFLDHRITRKMLGDMAKGKDFLNLFAYTGSASVHAACGGAKSTTTIDMSNTYLGWAQENMELNNQVGDQHEFIQADCLQWLQEVDDTFDLIFIDPPTFSNSKRMKQTFDIQRDHIMLMENLKRMLRTDGKIVFSNNKRQFKMDLEKLNELGLDAKNISDKTLPMDFAKNKHIHNSWIITHKED.

The THUMP domain maps to 43–154 (TAYRCCLWTR…GEKGVLGLDM (112 aa)).

The protein belongs to the methyltransferase superfamily. RlmKL family.

The protein resides in the cytoplasm. It carries out the reaction guanosine(2445) in 23S rRNA + S-adenosyl-L-methionine = N(2)-methylguanosine(2445) in 23S rRNA + S-adenosyl-L-homocysteine + H(+). It catalyses the reaction guanosine(2069) in 23S rRNA + S-adenosyl-L-methionine = N(2)-methylguanosine(2069) in 23S rRNA + S-adenosyl-L-homocysteine + H(+). Its function is as follows. Specifically methylates the guanine in position 2445 (m2G2445) and the guanine in position 2069 (m7G2069) of 23S rRNA. This chain is Ribosomal RNA large subunit methyltransferase K/L, found in Photobacterium profundum (strain SS9).